Here is a 166-residue protein sequence, read N- to C-terminus: Regulatory protein RecX (166 aa).

This sequence belongs to the RecX family.

It is found in the cytoplasm. Functionally, modulates RecA activity. This Escherichia coli O7:K1 (strain IAI39 / ExPEC) protein is Regulatory protein RecX.